A 393-amino-acid polypeptide reads, in one-letter code: Glycerol-3-phosphate dehydrogenase [NAD(+)] 1 (393 aa).

NAD(+) is bound by residues 45–50, Phe133, Lys157, and Ala190; that span reads GSGNWG. Position 157 (Lys157) interacts with substrate. The active-site Proton acceptor is the Lys250. Residues Arg316 and Gln345 each coordinate NAD(+). 316–317 contributes to the substrate binding site; it reads RN.

Belongs to the NAD-dependent glycerol-3-phosphate dehydrogenase family.

The catalysed reaction is sn-glycerol 3-phosphate + NAD(+) = dihydroxyacetone phosphate + NADH + H(+). The protein is Glycerol-3-phosphate dehydrogenase [NAD(+)] 1 (gpd1) of Cyberlindnera jadinii (Torula yeast).